The sequence spans 812 residues: Endogenous retrovirus group K member 18 Pol protein (812 aa).

The region spanning 57-245 is the Reverse transcriptase domain; the sequence is LEKGHIEPSF…TPFHYLGMQI (189 aa). The short motif at 161–164 is the LPQG element; it reads LPQG. Residues 195 to 198 carry the YXDD motif; it reads YFDD. The RNase H type-1 domain occupies 460–590; that stretch reads LENALTVFTD…ADLLVSSAFI (131 aa). Positions 469, 497, 517, and 582 each coordinate Mg(2+). The segment at 587–628 adopts an Integrase-type zinc-finger fold; sequence SAFIKAQELHALTHVNAAGLKNKFDVTWKQAKDIVQHCTQCQ. Zn(2+) is bound by residues His-596, His-600, Cys-624, and Cys-627. The Integrase catalytic domain maps to 637–803; the sequence is AGVNPEVCVL…TSAEHLTGKK (167 aa).

This sequence belongs to the beta type-B retroviral polymerase family. HERV class-II K(HML-2) pol subfamily.

It catalyses the reaction DNA(n) + a 2'-deoxyribonucleoside 5'-triphosphate = DNA(n+1) + diphosphate. The catalysed reaction is Endonucleolytic cleavage to 5'-phosphomonoester.. In terms of biological role, early post-infection, the reverse transcriptase converts the viral RNA genome into double-stranded viral DNA. The RNase H domain of the reverse transcriptase performs two functions. It degrades the RNA template and specifically removes the RNA primer from the RNA/DNA hybrid. Following nuclear import, the integrase catalyzes the insertion of the linear, double-stranded viral DNA into the host cell chromosome. Endogenous Pol proteins may have kept, lost or modified their original function during evolution. In Homo sapiens (Human), this protein is Endogenous retrovirus group K member 18 Pol protein (ERVK-18).